We begin with the raw amino-acid sequence, 65 residues long: Large ribosomal subunit protein bL35 (65 aa).

Belongs to the bacterial ribosomal protein bL35 family.

The polypeptide is Large ribosomal subunit protein bL35 (Aeromonas salmonicida (strain A449)).